Reading from the N-terminus, the 123-residue chain is Cysteine proteinase inhibitor 8 (123 aa).

The first 19 residues, 1–19 (MARIPLLLALLLAVSAAAA), serve as a signal peptide directing secretion. The Cystatin domain maps to 33–91 (GGWSPITDVGDPHIQELGGWAVERHASLSSDGLRFRRVTSGEQQVVSGMNYRLVVSASD). Residues 76–80 (QVVSG) carry the Secondary area of contact motif.

This sequence belongs to the cystatin family. Phytocystatin subfamily.

It localises to the secreted. In terms of biological role, specific inhibitor of cysteine proteinases. Probably involved in the regulation of endogenous processes and in defense against pests and pathogens. The protein is Cysteine proteinase inhibitor 8 of Oryza sativa subsp. japonica (Rice).